The chain runs to 418 residues: D-amino acid dehydrogenase (418 aa).

FAD is bound at residue 3–17; that stretch reads VLVLGAGVAGVSSAW.

The protein belongs to the DadA oxidoreductase family. Requires FAD as cofactor.

The catalysed reaction is a D-alpha-amino acid + A + H2O = a 2-oxocarboxylate + AH2 + NH4(+). The protein operates within amino-acid degradation; D-alanine degradation; NH(3) and pyruvate from D-alanine: step 1/1. Its function is as follows. Oxidative deamination of D-amino acids. The polypeptide is D-amino acid dehydrogenase (Neisseria meningitidis serogroup C / serotype 2a (strain ATCC 700532 / DSM 15464 / FAM18)).